The sequence spans 274 residues: MTLQEDIIRQLGVKAVIDPKQEIRQSVDFLKAYLLKHPFLKTYVLGISGGQDSSLAGKLAQMAIEELRAETGDEQYQFIAVRLPYGVQADEADAQKALAFIQPDQALTVNIKEAVDGQLRALETAGLEISDFNKGNIKARQRMISQYAIAGQTAGAVIGTDHAAENVMGFFTKFGDGGADILPLFRLTKRQGKALLKALKADPSLYEKVPTADLEDKKPGLADEVALGVSYQEIDDYLEGHTISAEAQARIEDWWHKGQHKRHLPITIFDDFWK.

46–53 provides a ligand contact to ATP; the sequence is GISGGQDS. Aspartate 52 lines the Mg(2+) pocket. Arginine 140 is a binding site for deamido-NAD(+). Threonine 160 serves as a coordination point for ATP. Glutamate 165 serves as a coordination point for Mg(2+). Lysine 173 and aspartate 180 together coordinate deamido-NAD(+). ATP-binding residues include lysine 189 and threonine 211. 260 to 261 serves as a coordination point for deamido-NAD(+); that stretch reads HK.

This sequence belongs to the NAD synthetase family. As to quaternary structure, homodimer.

The catalysed reaction is deamido-NAD(+) + NH4(+) + ATP = AMP + diphosphate + NAD(+) + H(+). It functions in the pathway cofactor biosynthesis; NAD(+) biosynthesis; NAD(+) from deamido-NAD(+) (ammonia route): step 1/1. In terms of biological role, catalyzes the ATP-dependent amidation of deamido-NAD to form NAD. Uses ammonia as a nitrogen source. The polypeptide is NH(3)-dependent NAD(+) synthetase (Streptococcus equi subsp. zooepidemicus (strain H70)).